A 328-amino-acid chain; its full sequence is Sterol demethylase protein B (328 aa).

Belongs to the NAD(P)-dependent epimerase/dehydratase family.

It catalyses the reaction a 3beta-hydroxy-4alpha-methylsteroid-4beta-carboxylate + NAD(+) = a 4alpha-methyl-3-oxosteroid + CO2 + NADH. The catalysed reaction is a 3beta-hydroxy-4alpha-methylsteroid-4beta-carboxylate + NADP(+) = a 4alpha-methyl-3-oxosteroid + CO2 + NADPH. The enzyme catalyses 4beta-carboxy-4alpha-methyl-5alpha-cholesta-8,24-dien-3beta-ol + NAD(+) = 3-dehydro-4alpha-methylzymosterol + CO2 + NADH. It carries out the reaction 4beta-carboxy-4alpha-methyl-5alpha-cholesta-8,24-dien-3beta-ol + NADP(+) = 3-dehydro-4alpha-methylzymosterol + CO2 + NADPH. It catalyses the reaction 3-dehydro-4alpha-methylzymosterol + NADPH + H(+) = 4alpha-methylzymosterol + NADP(+). It functions in the pathway steroid biosynthesis; sterol biosynthesis. In terms of biological role, participates in the biosynthesis of bacterial sterols. Together with SdmA, removes one methyl group from the C-4 position of 4,4-dimethylated steroid molecules. SdmB catalyzes an oxidative decarboxylation that results in reduction of the 3beta-hydroxy group at the C-3 carbon to an oxo group. It also functions as a ketoreductase that converts the C-3 oxo group back to a hydroxyl group after C-4 demethylation. This Methylococcus capsulatus (strain ATCC 33009 / NCIMB 11132 / Bath) protein is Sterol demethylase protein B.